Consider the following 143-residue polypeptide: Rheacalcin-2 (143 aa).

Cystine bridges form between cysteine 6-cysteine 17, cysteine 34-cysteine 139, and cysteine 114-cysteine 131. Residues 13-140 (FDGRCFGFFP…CSDRKPFICE (128 aa)) form the C-type lectin domain. Phosphoserine is present on residues serine 66 and serine 68.

Its subcellular location is the secreted. The protein localises to the extracellular space. The protein resides in the extracellular matrix. This is Rheacalcin-2 from Rhea americana (Greater rhea).